Consider the following 278-residue polypeptide: tRNA(Phe) (4-demethylwyosine(37)-C(7)) aminocarboxypropyltransferase (278 aa).

S-adenosyl-L-methionine is bound by residues S109, R116, E155, and 183-184 (DN).

This sequence belongs to the class I-like SAM-binding methyltransferase superfamily. TRM5/TYW2 family.

It localises to the cytoplasm. It carries out the reaction 4-demethylwyosine(37) in tRNA(Phe) + S-adenosyl-L-methionine = 4-demethyl-7-[(3S)-3-amino-3-carboxypropyl]wyosine(37) in tRNA(Phe) + S-methyl-5'-thioadenosine + H(+). Its function is as follows. S-adenosyl-L-methionine-dependent transferase that acts as a component of the wyosine derivatives biosynthesis pathway. Catalyzes the transfer of the alpha-amino-alpha-carboxypropyl (acp) group from S-adenosyl-L-methionine to 4-demethylwyosine (imG-14), forming 7-aminocarboxypropyl-demethylwyosine (wybutosine-86) at position 37 of tRNA(Phe). The polypeptide is tRNA(Phe) (4-demethylwyosine(37)-C(7)) aminocarboxypropyltransferase (Pyrococcus horikoshii (strain ATCC 700860 / DSM 12428 / JCM 9974 / NBRC 100139 / OT-3)).